A 507-amino-acid polypeptide reads, in one-letter code: Histidine ammonia-lyase (507 aa).

A cross-link (5-imidazolinone (Ala-Gly)) is located at residues 141-143 (ASG). At serine 142 the chain carries 2,3-didehydroalanine (Ser).

Belongs to the PAL/histidase family. Post-translationally, contains an active site 4-methylidene-imidazol-5-one (MIO), which is formed autocatalytically by cyclization and dehydration of residues Ala-Ser-Gly.

The protein resides in the cytoplasm. The enzyme catalyses L-histidine = trans-urocanate + NH4(+). It participates in amino-acid degradation; L-histidine degradation into L-glutamate; N-formimidoyl-L-glutamate from L-histidine: step 1/3. The sequence is that of Histidine ammonia-lyase from Burkholderia pseudomallei (strain 668).